A 76-amino-acid polypeptide reads, in one-letter code: UPF0291 protein BPUM_1689 (76 aa).

2 disordered regions span residues 1 to 31 (MISKNQLARINELSKKSKETGLSDAEKTEQK) and 56 to 76 (DPEGNDVTPEKLKRERDQNLH). Composition is skewed to basic and acidic residues over residues 12–31 (ELSKKSKETGLSDAEKTEQK) and 63–76 (TPEKLKRERDQNLH).

Belongs to the UPF0291 family.

The protein resides in the cytoplasm. The chain is UPF0291 protein BPUM_1689 from Bacillus pumilus (strain SAFR-032).